Here is a 227-residue protein sequence, read N- to C-terminus: Cytidylate kinase (227 aa).

Residue 12 to 20 (GPSGAGKGT) coordinates ATP.

This sequence belongs to the cytidylate kinase family. Type 1 subfamily.

It localises to the cytoplasm. The enzyme catalyses CMP + ATP = CDP + ADP. It carries out the reaction dCMP + ATP = dCDP + ADP. In Citrobacter koseri (strain ATCC BAA-895 / CDC 4225-83 / SGSC4696), this protein is Cytidylate kinase.